We begin with the raw amino-acid sequence, 131 residues long: Profilin (131 aa).

The protein belongs to the profilin family. As to quaternary structure, occurs in many kinds of cells as a complex with monomeric actin in a 1:1 ratio.

It is found in the cytoplasm. The protein resides in the cytoskeleton. In terms of biological role, binds to actin and affects the structure of the cytoskeleton. At high concentrations, profilin prevents the polymerization of actin, whereas it enhances it at low concentrations. By binding to PIP2, it inhibits the formation of IP3 and DG. This Citrus sinensis (Sweet orange) protein is Profilin.